The primary structure comprises 149 residues: UPF0178 protein NT01CX_0440 (149 aa).

The protein belongs to the UPF0178 family.

The polypeptide is UPF0178 protein NT01CX_0440 (Clostridium novyi (strain NT)).